Consider the following 141-residue polypeptide: Hemoglobin subunit alpha (141 aa).

Residues 1–141 enclose the Globin domain; it reads VLSSDDKCNV…VSSVLTSKYR (141 aa). His-58 is a binding site for O2. His-87 provides a ligand contact to heme b.

It belongs to the globin family. In terms of assembly, heterotetramer of two alpha chains and two beta chains. Red blood cells.

Involved in oxygen transport from the lung to the various peripheral tissues. The protein is Hemoglobin subunit alpha (HBA) of Crocodylus niloticus (Nile crocodile).